The following is a 64-amino-acid chain: Alpha-conotoxin Lt14.1 (64 aa).

The signal sequence occupies residues 1-20 (MKLSVMFIVFLMLTMPMTCA). The propeptide occupies 21–50 (GISRSATNGGEADVRAHDKAANLMALLQER). Disulfide bonds link C52-C60 and C56-C63. C63 is modified (cysteine amide).

It belongs to the conotoxin L superfamily. May contain a 4-hydroxyproline. Expressed by the venom duct.

It localises to the secreted. Its function is as follows. Alpha-conotoxins act on postsynaptic membranes, they bind to the nicotinic acetylcholine receptors (nAChR) and thus inhibit them. This synthetic peptide displays analgesic activity in a hot plate assay. Analgesia is also observed against second phase pain in formalin-induced inflammatory pain model, and in a rat model of mechanically-induced pain. Effects downstream of nAChR are inhibition of calcium influx, inhibition of ERK1/2 phosphorylation and inhibition of c-fos/NOS expression. Genes associated with drug dependence are not up-regulated by this toxin. Treatment with this toxin reversed morphine withdrawal symptoms in mice. The polypeptide is Alpha-conotoxin Lt14.1 (Conus litteratus (Lettered cone)).